The sequence spans 335 residues: Glyoxylate reductase (335 aa).

Residues 159 to 162 (MGRI), 181 to 183 (SRS), and 240 to 242 (TGR) contribute to the NADP(+) site. Residues arginine 242 and glutamate 271 contribute to the active site. The Proton donor role is filled by histidine 290. 290-292 (HAA) is a binding site for NADP(+).

The protein belongs to the D-isomer specific 2-hydroxyacid dehydrogenase family. GyaR subfamily. Homodimer.

The protein localises to the cytoplasm. The enzyme catalyses glycolate + NAD(+) = glyoxylate + NADH + H(+). This Aeropyrum pernix (strain ATCC 700893 / DSM 11879 / JCM 9820 / NBRC 100138 / K1) protein is Glyoxylate reductase.